We begin with the raw amino-acid sequence, 203 residues long: MPVVLGQKAPDFTVNTSKGPITLSNYRGKWVLLFSHPGDFTPVCTTEFIAFTERYEDFQKLGVELIGLSIDSVFSHIAWIRDIKEHFGIDIPFPIIADIDKEVAREYNLIDEKSGATVRGVFIIDPNQIVRWMIYYPAETGRNIEEIIRVIKALQFNWDRKLATPANWQPGQEGIEPAPTTVDSSFKRDNEQGVKTWYLKFVK.

One can recognise a Thioredoxin domain in the interval 3–156 (VVLGQKAPDF…IIRVIKALQF (154 aa)). Catalysis depends on Cys-44, which acts as the Cysteine sulfenic acid (-SOH) intermediate. Position 119 (Arg-119) interacts with substrate.

It belongs to the peroxiredoxin family. Prx6 subfamily. As to quaternary structure, homodecamer. Pentamer of dimers that assemble into a ring structure.

The protein resides in the cytoplasm. It catalyses the reaction a hydroperoxide + [thioredoxin]-dithiol = an alcohol + [thioredoxin]-disulfide + H2O. Functionally, thiol-specific peroxidase that catalyzes the reduction of hydrogen peroxide and organic hydroperoxides to water and alcohols, respectively. Plays a role in cell protection against oxidative stress by detoxifying peroxides. The polypeptide is Peroxiredoxin (Thermoplasma volcanium (strain ATCC 51530 / DSM 4299 / JCM 9571 / NBRC 15438 / GSS1)).